The chain runs to 145 residues: Globin-1 (145 aa).

The Globin domain maps to 1–145; it reads GISADQAKAL…VIVPGMKAGY (145 aa). Heme b-binding residues include His-63 and His-92.

It belongs to the globin family. As to quaternary structure, monomer.

In Liolophura japonica (Chiton), this protein is Globin-1.